A 475-amino-acid chain; its full sequence is Sulfate adenylyltransferase subunit 1 (475 aa).

The 215-residue stretch at 25–239 (KSLLRFLTCG…EVLETVEIQR (215 aa)) folds into the tr-type G domain. Residues 34–41 (GSVDDGKS) are G1. 34–41 (GSVDDGKS) lines the GTP pocket. Residues 92–96 (GITID) are G2. The segment at 113–116 (DTPG) is G3. GTP is bound by residues 113 to 117 (DTPGH) and 168 to 171 (NKMD). A G4 region spans residues 168–171 (NKMD). Residues 206–208 (SAL) form a G5 region.

This sequence belongs to the TRAFAC class translation factor GTPase superfamily. Classic translation factor GTPase family. CysN/NodQ subfamily. As to quaternary structure, heterodimer composed of CysD, the smaller subunit, and CysN.

It catalyses the reaction sulfate + ATP + H(+) = adenosine 5'-phosphosulfate + diphosphate. The protein operates within sulfur metabolism; hydrogen sulfide biosynthesis; sulfite from sulfate: step 1/3. With CysD forms the ATP sulfurylase (ATPS) that catalyzes the adenylation of sulfate producing adenosine 5'-phosphosulfate (APS) and diphosphate, the first enzymatic step in sulfur assimilation pathway. APS synthesis involves the formation of a high-energy phosphoric-sulfuric acid anhydride bond driven by GTP hydrolysis by CysN coupled to ATP hydrolysis by CysD. In Escherichia coli O157:H7, this protein is Sulfate adenylyltransferase subunit 1.